Here is a 234-residue protein sequence, read N- to C-terminus: Immune-associated nucleotide-binding protein 2 (234 aa).

In terms of domain architecture, AIG1-type G spans 21-223 (KPVKNIVLVG…YTEDMYRNIK (203 aa)). Residues 30–38 (GRSVNGICT), serine 51, and asparagine 183 each bind GTP.

The protein belongs to the TRAFAC class TrmE-Era-EngA-EngB-Septin-like GTPase superfamily. AIG1/Toc34/Toc159-like paraseptin GTPase family. IAN subfamily. In terms of tissue distribution, mostly expressed in pollen. Also detected in lateral roots and radicles.

This is Immune-associated nucleotide-binding protein 2 from Arabidopsis thaliana (Mouse-ear cress).